Reading from the N-terminus, the 275-residue chain is Bis(5'-nucleosyl)-tetraphosphatase, symmetrical (275 aa).

Belongs to the Ap4A hydrolase family.

The catalysed reaction is P(1),P(4)-bis(5'-adenosyl) tetraphosphate + H2O = 2 ADP + 2 H(+). Hydrolyzes diadenosine 5',5'''-P1,P4-tetraphosphate to yield ADP. The polypeptide is Bis(5'-nucleosyl)-tetraphosphatase, symmetrical (Marinomonas sp. (strain MWYL1)).